The primary structure comprises 256 residues: Hydroxyacylglutathione hydrolase (256 aa).

The Zn(2+) site is built by His53, His55, Asp57, His58, His111, Asp128, and His166.

Belongs to the metallo-beta-lactamase superfamily. Glyoxalase II family. In terms of assembly, monomer. Zn(2+) serves as cofactor.

It carries out the reaction an S-(2-hydroxyacyl)glutathione + H2O = a 2-hydroxy carboxylate + glutathione + H(+). The protein operates within secondary metabolite metabolism; methylglyoxal degradation; (R)-lactate from methylglyoxal: step 2/2. Thiolesterase that catalyzes the hydrolysis of S-D-lactoyl-glutathione to form glutathione and D-lactic acid. The protein is Hydroxyacylglutathione hydrolase of Thiobacillus denitrificans (strain ATCC 25259 / T1).